A 429-amino-acid polypeptide reads, in one-letter code: Adenylosuccinate synthetase (429 aa).

GTP-binding positions include 12 to 18 (GDEGKGK) and 40 to 42 (GHT). Aspartate 13 (proton acceptor) is an active-site residue. The Mg(2+) site is built by aspartate 13 and glycine 40. IMP-binding positions include 13 to 16 (DEGK), 38 to 41 (NAGH), threonine 129, arginine 143, glutamine 224, threonine 239, and arginine 303. Histidine 41 (proton donor) is an active-site residue. 299–305 (VTTGRAR) is a substrate binding site. Residues arginine 305, 331–333 (KLD), and 413–415 (GVG) each bind GTP.

This sequence belongs to the adenylosuccinate synthetase family. As to quaternary structure, homodimer. Mg(2+) is required as a cofactor.

It localises to the cytoplasm. It carries out the reaction IMP + L-aspartate + GTP = N(6)-(1,2-dicarboxyethyl)-AMP + GDP + phosphate + 2 H(+). Its pathway is purine metabolism; AMP biosynthesis via de novo pathway; AMP from IMP: step 1/2. Functionally, plays an important role in the de novo pathway of purine nucleotide biosynthesis. Catalyzes the first committed step in the biosynthesis of AMP from IMP. In Rhodococcus erythropolis (strain PR4 / NBRC 100887), this protein is Adenylosuccinate synthetase.